Here is a 582-residue protein sequence, read N- to C-terminus: Proline--tRNA ligase (582 aa).

The protein belongs to the class-II aminoacyl-tRNA synthetase family. ProS type 1 subfamily. In terms of assembly, homodimer.

It localises to the cytoplasm. It catalyses the reaction tRNA(Pro) + L-proline + ATP = L-prolyl-tRNA(Pro) + AMP + diphosphate. Its function is as follows. Catalyzes the attachment of proline to tRNA(Pro) in a two-step reaction: proline is first activated by ATP to form Pro-AMP and then transferred to the acceptor end of tRNA(Pro). As ProRS can inadvertently accommodate and process non-cognate amino acids such as alanine and cysteine, to avoid such errors it has two additional distinct editing activities against alanine. One activity is designated as 'pretransfer' editing and involves the tRNA(Pro)-independent hydrolysis of activated Ala-AMP. The other activity is designated 'posttransfer' editing and involves deacylation of mischarged Ala-tRNA(Pro). The misacylated Cys-tRNA(Pro) is not edited by ProRS. The polypeptide is Proline--tRNA ligase (Mycobacterium tuberculosis (strain CDC 1551 / Oshkosh)).